The sequence spans 377 residues: Nucleoside diphosphate kinase homolog 7 (377 aa).

The DM10 domain occupies 3–91; sequence HSERFVFIAE…YTARQLGSKK (89 aa).

This sequence belongs to the NDK family. In terms of assembly, component of sperm flagellar doublet microtubules. Component of the gamma-tubulin ring complex. In terms of tissue distribution, expressed in trachea multiciliated cells.

The protein resides in the cytoplasm. Its subcellular location is the cytoskeleton. It localises to the microtubule organizing center. The protein localises to the centrosome. It is found in the nucleus. The protein resides in the spindle. Its subcellular location is the cilium axoneme. It localises to the flagellum axoneme. The protein localises to the cell projection. It is found in the cilium. Its function is as follows. Possesses an intrinsic kinase activity. Displays 3'-5' exonuclease activity with a preference for single-stranded DNA. Does not seem to have nucleoside diphosphate kinase activity. Functional component of the gamma-tubulin ring complex, implicated in the regulation of the microtubule-nucleating activity of the gamma-tubulin ring complex in centrosomes, in a kinase activity-dependent manner. Part of the dynein-decorated doublet microtubules (DMTs) in cilia axoneme, which is required for motile cilia beating. This is Nucleoside diphosphate kinase homolog 7 (NME7) from Bos taurus (Bovine).